Here is a 199-residue protein sequence, read N- to C-terminus: Nucleoside triphosphate pyrophosphatase (199 aa).

The Proton acceptor role is filled by aspartate 72.

Belongs to the Maf family. A divalent metal cation is required as a cofactor.

It localises to the cytoplasm. The catalysed reaction is a ribonucleoside 5'-triphosphate + H2O = a ribonucleoside 5'-phosphate + diphosphate + H(+). It carries out the reaction a 2'-deoxyribonucleoside 5'-triphosphate + H2O = a 2'-deoxyribonucleoside 5'-phosphate + diphosphate + H(+). In terms of biological role, nucleoside triphosphate pyrophosphatase. May have a dual role in cell division arrest and in preventing the incorporation of modified nucleotides into cellular nucleic acids. The sequence is that of Nucleoside triphosphate pyrophosphatase from Synechococcus elongatus (strain ATCC 33912 / PCC 7942 / FACHB-805) (Anacystis nidulans R2).